Here is a 96-residue protein sequence, read N- to C-terminus: Co-chaperonin GroES (96 aa).

This sequence belongs to the GroES chaperonin family. As to quaternary structure, heptamer of 7 subunits arranged in a ring. Interacts with the chaperonin GroEL.

Its subcellular location is the cytoplasm. Together with the chaperonin GroEL, plays an essential role in assisting protein folding. The GroEL-GroES system forms a nano-cage that allows encapsulation of the non-native substrate proteins and provides a physical environment optimized to promote and accelerate protein folding. GroES binds to the apical surface of the GroEL ring, thereby capping the opening of the GroEL channel. This Methylobacterium radiotolerans (strain ATCC 27329 / DSM 1819 / JCM 2831 / NBRC 15690 / NCIMB 10815 / 0-1) protein is Co-chaperonin GroES.